Reading from the N-terminus, the 158-residue chain is Endoribonuclease YbeY (158 aa).

Zn(2+)-binding residues include His-121, His-125, and His-131.

Belongs to the endoribonuclease YbeY family. Zn(2+) serves as cofactor.

It localises to the cytoplasm. Single strand-specific metallo-endoribonuclease involved in late-stage 70S ribosome quality control and in maturation of the 3' terminus of the 16S rRNA. The protein is Endoribonuclease YbeY of Exiguobacterium sp. (strain ATCC BAA-1283 / AT1b).